The primary structure comprises 1733 residues: Desertorin synthase (1733 aa).

The segment at 21 to 358 (RIRQQSRSSR…HAPTRDLTEW (338 aa)) is N-terminal acylcarrier protein transacylase domain (SAT). The region spanning 372–799 (DCRIAVVGMS…GGNTALLLEE (428 aa)) is the Ketosynthase family 3 (KS3) domain. A compositionally biased stretch (basic and acidic residues) spans 406 to 422 (HVPPDRYDVQSHTDPTG). The interval 406–429 (HVPPDRYDVQSHTDPTGRRMNTSQ) is disordered. Active-site for beta-ketoacyl synthase activity residues include Cys544, His679, and His718. The tract at residues 903-1211 (FVFSGQGSFY…DNWHTLAGSM (309 aa)) is malonyl-CoA:ACP transacylase (MAT) domain. The N-terminal hotdog fold stretch occupies residues 1288–1420 (HRIVEETFWA…GTVSVGNAAS (133 aa)). Residues 1288 to 1598 (HRIVEETFWA…LRPLPRILMH (311 aa)) enclose the PKS/mFAS DH domain. The product template (PT) domain stretch occupies residues 1299-1594 (GGRVVMESNV…AGVTLRPLPR (296 aa)). Catalysis depends on His1320, which acts as the Proton acceptor; for dehydratase activity. The tract at residues 1448–1598 (ADRLTRDTVY…LRPLPRILMH (151 aa)) is C-terminal hotdog fold. Residue Asp1506 is the Proton donor; for dehydratase activity of the active site. Residues 1608-1659 (HNWGNSPAKPEAKPEMVPTSGSSSAAGSPSGSSAGPLSIPERLADPSETSFQ) are disordered. The span at 1627–1643 (SGSSSAAGSPSGSSAGP) shows a compositional bias: low complexity. The Carrier domain maps to 1659-1733 (QSKASKVSKA…TVGEVKRQML (75 aa)). Ser1696 bears the O-(pantetheine 4'-phosphoryl)serine mark.

Requires pantetheine 4'-phosphate as cofactor.

Its pathway is secondary metabolite biosynthesis. Non-reducing polyketide synthase; part of the gene cluster that mediates the biosynthesis of the bicoumarin desertorin. The non-reducing polyketide synthase desS first catalyzes the formation of the pentaketidic 4,7-dihydroxy-5-methylcoumarin from acetyl coenzyme A and 4 malonyl coenzyme A molecules. Further O-methylation by desB leads to the formation of 7-demethylsiderin. Then, an oxidative phenol coupling catalyzed by the cytochrome P450 monooxygenase desC forms the 6,8'-dimer M-desertorin A via dimerization the monomeric precursor, 7-demethylsiderin. M-desertorin A is further converted to M-desertorin C. The protein is Desertorin synthase of Aspergillus desertorum (Emericella desertorum).